The chain runs to 353 residues: Protein Wnt-11b-2 (353 aa).

An N-terminal signal peptide occupies residues 1–22 (MALIRHCVTLLLILCCSRLCGA). 3 N-linked (GlcNAc...) asparagine glycosylation sites follow: N31, N38, and N88. 5 disulfides stabilise this stretch: C78/C89, C128/C136, C138/C155, C208/C222, and C210/C217. A lipid anchor (O-palmitoleoyl serine; by PORCN) is attached at S214. Sulfotyrosine is present on residues Y274 and Y281. Intrachain disulfides connect C282/C313, C298/C308, C312/C352, C328/C343, C330/C340, and C335/C336. Residue N299 is glycosylated (N-linked (GlcNAc...) asparagine).

This sequence belongs to the Wnt family. Homodimer. Secreted homodimers form a complex with wnt5a homodimers; tyrosine sulfation of both wnt11 and wnt5a by tpst1 is required for this interaction. Interacts with the transmembrane receptor fzd7/fz7. Interacts with lrp6 and ryk. Interacts with tdgf1/frl1. Interacts weakly with frzb1 and strongly with frzb2/crescent. Interaction with frzb2/crescent antagonizes wnt11 function in the neuroectoderm, but enhances it in mesodermal tissue. In terms of processing, glycosylation is required for protein secretion. Palmitoleoylation is required for efficient binding to frizzled receptors. Depalmitoleoylation leads to Wnt signaling pathway inhibition.

Its subcellular location is the secreted. The protein resides in the extracellular space. It is found in the extracellular matrix. In terms of biological role, ligand for the frizzled7 transmembrane receptor. Primarily acts via non-canonical Wnt pathways mediated by either Ca(2+) and PKC, or by JNK and dvl2/dsh. Depending on the cellular context, can also signal via the canonical Wnt pathway mediated by beta-catenin and dvl2/dsh. May also inhibit canonical Wnt signaling. Maternally initiates dorsal/ventral axis formation by a canonical route, which signals via lrp6. In a complex with wnt5a, activates the canonical and non-canonical processes involved in axis formation. In the non-canonical pathway, acts through fzd7/fz7 to induce phosphorylation of dvl2/dsh. Signals through a non-canonical Wnt pathway to regulate convergent extension movements during gastrulation. Interactions with the secreted Wnt antagonist sfrp5 to coordinate foregut development, acting via a non-canonical wnt pathway whereby sfrp5 restricts wnt11b activity to prevent inappropriate foregut formation. Mediates cardiogenesis via non-canonical Wnt signaling involving JNK-activation and PKC. Acts redundantly with wnt11/wnt11r during pronephros induction. The sequence is that of Protein Wnt-11b-2 from Xenopus tropicalis (Western clawed frog).